We begin with the raw amino-acid sequence, 238 residues long: 3-deoxy-manno-octulosonate cytidylyltransferase (238 aa).

It belongs to the KdsB family.

The protein localises to the cytoplasm. It catalyses the reaction 3-deoxy-alpha-D-manno-oct-2-ulosonate + CTP = CMP-3-deoxy-beta-D-manno-octulosonate + diphosphate. It participates in nucleotide-sugar biosynthesis; CMP-3-deoxy-D-manno-octulosonate biosynthesis; CMP-3-deoxy-D-manno-octulosonate from 3-deoxy-D-manno-octulosonate and CTP: step 1/1. Its pathway is bacterial outer membrane biogenesis; lipopolysaccharide biosynthesis. Activates KDO (a required 8-carbon sugar) for incorporation into bacterial lipopolysaccharide in Gram-negative bacteria. The chain is 3-deoxy-manno-octulosonate cytidylyltransferase from Nitratiruptor sp. (strain SB155-2).